The primary structure comprises 100 residues: High mobility group protein C (100 aa).

A DNA-binding region (HMG box) is located at residues 12–80; it reads PKRPLSAFFL…KYEKDMQAYE (69 aa). The segment at 81–100 is disordered; the sequence is KKYGKPEKQKKIKKNKKGSK. A compositionally biased stretch (basic residues) spans 90 to 100; that stretch reads KKIKKNKKGSK.

It localises to the nucleus. The protein localises to the chromosome. The protein is High mobility group protein C of Tetrahymena thermophila.